The primary structure comprises 375 residues: D-alanine--D-alanine ligase (375 aa).

The 204-residue stretch at 145–348 folds into the ATP-grasp domain; sequence KRLLRDADLE…YPALITRLIE (204 aa). 175 to 230 provides a ligand contact to ATP; sequence ITYLGSSLFVKPANQGSSVGVSKVINRISFDQALALAFCFDDKVLVESAINGRELE. Residues D302, E315, and N317 each coordinate Mg(2+).

Belongs to the D-alanine--D-alanine ligase family. It depends on Mg(2+) as a cofactor. Requires Mn(2+) as cofactor.

It is found in the cytoplasm. The enzyme catalyses 2 D-alanine + ATP = D-alanyl-D-alanine + ADP + phosphate + H(+). It functions in the pathway cell wall biogenesis; peptidoglycan biosynthesis. In terms of biological role, cell wall formation. The protein is D-alanine--D-alanine ligase of Baumannia cicadellinicola subsp. Homalodisca coagulata.